Here is a 520-residue protein sequence, read N- to C-terminus: Keratin, type II cytoskeletal 4 (520 aa).

Positions 1–136 (MIARQQCVRG…DPEIQKVRTE (136 aa)) are head. Arg-13 carries the post-translational modification Omega-N-methylarginine. Positions 137 to 172 (EREQIKLLNNKFASFIDKVQFLEQQNKVLETKWNLL) are coil 1A. The 314-residue stretch at 137 to 450 (EREQIKLLNN…KLLEGEEYRM (314 aa)) folds into the IF rod domain. The linker 1 stretch occupies residues 173–191 (QQQTTTTSSKNLEPLFETY). The segment at 192–284 (LSVLRKQLDT…LYDAELSQMQ (93 aa)) is coil 1B. A linker 12 region spans residues 285–307 (THVSDTSVVLSMDNNRNLDLDSI). Positions 308–447 (IAEVRAQYEE…TYRKLLEGEE (140 aa)) are coil 2. A tail region spans residues 448–520 (YRMSGECQSA…ISTTTLNKRR (73 aa)). Residues 500 to 520 (GSVSGSSSSKIISTTTLNKRR) form a disordered region. Over residues 503 to 514 (SGSSSSKIISTT) the composition is skewed to low complexity.

It belongs to the intermediate filament family. As to quaternary structure, heterotetramer of two type I and two type II keratins. Keratin-4 is generally associated with keratin-13. Detected in the suprabasal layer of the stratified epithelium of the esophagus, exocervix, vagina, mouth and lingual mucosa, and in cells and cell clusters in the mucosa and serous gland ducts of the esophageal submucosa (at protein level). Expressed widely in the exocervix and esophageal epithelium, with lowest levels detected in the basal cell layer.

This is Keratin, type II cytoskeletal 4 (KRT4) from Homo sapiens (Human).